We begin with the raw amino-acid sequence, 655 residues long: Very long-chain specific acyl-CoA dehydrogenase, mitochondrial (655 aa).

The transit peptide at 1 to 40 (MQAARIAPSLGRQLLRFGGGSSRPTALLGQPWPGPARRPY) directs the protein to the mitochondrion. The tract at residues 41–482 (AGGAAQLALD…ALQGCMDKGK (442 aa)) is catalytic. Lys-51 carries the post-translational modification N6-acetyllysine. Lys-71 is modified (N6-acetyllysine; alternate). An N6-succinyllysine; alternate modification is found at Lys-71. Lys-195 is modified (N6-succinyllysine). 214 to 223 (FCLTEPSSGS) is an FAD binding site. At Cys-237 the chain carries S-nitrosocysteine. Lys-239 is subject to N6-acetyllysine; alternate. Position 239 is an N6-succinyllysine; alternate (Lys-239). 249 to 251 (WIS) serves as a coordination point for FAD. An N6-acetyllysine; alternate mark is found at Lys-276 and Lys-278. N6-succinyllysine; alternate is present on residues Lys-276 and Lys-278. Lys-298 bears the N6-acetyllysine mark. At Lys-331 the chain carries N6-acetyllysine; alternate. N6-succinyllysine; alternate is present on Lys-331. The residue at position 372 (Lys-372) is an N6-succinyllysine. 461–463 (FEG) contributes to the substrate binding site. Glu-462 serves as the catalytic Proton acceptor. 464–466 (TND) serves as a coordination point for FAD. An N6-acetyllysine; alternate modification is found at Lys-482. Lys-482 carries the post-translational modification N6-succinyllysine; alternate. Residues 483 to 516 (ELSGLGSALKNPFGNAGLLLGEAGKQLRRRAGLG) form a membrane-anchoring region. Residues Ser-517 and Ser-522 each carry the phosphoserine modification. Lys-550 is modified (N6-acetyllysine). N6-acetyllysine; alternate is present on Lys-556. Position 556 is an N6-succinyllysine; alternate (Lys-556). Gln-562 contacts FAD. N6-succinyllysine is present on Lys-639.

The protein belongs to the acyl-CoA dehydrogenase family. In terms of assembly, homodimer. Homodimerizes after import into the mitochondrion. FAD is required as a cofactor. S-nitrosylation at Cys-237 in liver improves catalytic efficiency.

It is found in the mitochondrion inner membrane. The enzyme catalyses a very-long-chain 2,3-saturated fatty acyl-CoA + oxidized [electron-transfer flavoprotein] + H(+) = a very-long-chain (2E)-enoyl-CoA + reduced [electron-transfer flavoprotein]. It catalyses the reaction dodecanoyl-CoA + oxidized [electron-transfer flavoprotein] + H(+) = (2E)-dodecenoyl-CoA + reduced [electron-transfer flavoprotein]. It carries out the reaction tetradecanoyl-CoA + oxidized [electron-transfer flavoprotein] + H(+) = (2E)-tetradecenoyl-CoA + reduced [electron-transfer flavoprotein]. The catalysed reaction is oxidized [electron-transfer flavoprotein] + hexadecanoyl-CoA + H(+) = (2E)-hexadecenoyl-CoA + reduced [electron-transfer flavoprotein]. The enzyme catalyses octadecanoyl-CoA + oxidized [electron-transfer flavoprotein] + H(+) = (2E)-octadecenoyl-CoA + reduced [electron-transfer flavoprotein]. It catalyses the reaction eicosanoyl-CoA + oxidized [electron-transfer flavoprotein] + H(+) = (2E)-eicosenoyl-CoA + reduced [electron-transfer flavoprotein]. It carries out the reaction docosanoyl-CoA + oxidized [electron-transfer flavoprotein] + H(+) = (2E)-docosenoyl-CoA + reduced [electron-transfer flavoprotein]. The catalysed reaction is tetracosanoyl-CoA + oxidized [electron-transfer flavoprotein] + H(+) = (2E)-tetracosenoyl-CoA + reduced [electron-transfer flavoprotein]. It functions in the pathway lipid metabolism; mitochondrial fatty acid beta-oxidation. In terms of biological role, very long-chain specific acyl-CoA dehydrogenase is one of the acyl-CoA dehydrogenases that catalyze the first step of mitochondrial fatty acid beta-oxidation, an aerobic process breaking down fatty acids into acetyl-CoA and allowing the production of energy from fats. The first step of fatty acid beta-oxidation consists in the removal of one hydrogen from C-2 and C-3 of the straight-chain fatty acyl-CoA thioester, resulting in the formation of trans-2-enoyl-CoA. Among the different mitochondrial acyl-CoA dehydrogenases, very long-chain specific acyl-CoA dehydrogenase acts specifically on acyl-CoAs with saturated 12 to 24 carbons long primary chains. This chain is Very long-chain specific acyl-CoA dehydrogenase, mitochondrial, found in Macaca fascicularis (Crab-eating macaque).